A 235-amino-acid chain; its full sequence is Glucosamine-6-phosphate deaminase (235 aa).

Asp-62 (proton acceptor; for enolization step) is an active-site residue. The For ring-opening step role is filled by Asn-128. The active-site Proton acceptor; for ring-opening step is His-130. Glu-135 (for ring-opening step) is an active-site residue.

Belongs to the glucosamine/galactosamine-6-phosphate isomerase family. NagB subfamily.

It carries out the reaction alpha-D-glucosamine 6-phosphate + H2O = beta-D-fructose 6-phosphate + NH4(+). The protein operates within amino-sugar metabolism; N-acetylneuraminate degradation; D-fructose 6-phosphate from N-acetylneuraminate: step 5/5. Catalyzes the reversible isomerization-deamination of glucosamine 6-phosphate (GlcN6P) to form fructose 6-phosphate (Fru6P) and ammonium ion. The protein is Glucosamine-6-phosphate deaminase of Streptococcus pneumoniae (strain JJA).